The primary structure comprises 365 residues: DNA replication and repair protein RecF (365 aa).

Residue 30–37 (GDNAQGKT) participates in ATP binding.

This sequence belongs to the RecF family.

It is found in the cytoplasm. The RecF protein is involved in DNA metabolism; it is required for DNA replication and normal SOS inducibility. RecF binds preferentially to single-stranded, linear DNA. It also seems to bind ATP. This chain is DNA replication and repair protein RecF, found in Alkaliphilus oremlandii (strain OhILAs) (Clostridium oremlandii (strain OhILAs)).